The chain runs to 117 residues: Large ribosomal subunit protein uL22 (117 aa).

It belongs to the universal ribosomal protein uL22 family. Part of the 50S ribosomal subunit.

Functionally, this protein binds specifically to 23S rRNA; its binding is stimulated by other ribosomal proteins, e.g. L4, L17, and L20. It is important during the early stages of 50S assembly. It makes multiple contacts with different domains of the 23S rRNA in the assembled 50S subunit and ribosome. Its function is as follows. The globular domain of the protein is located near the polypeptide exit tunnel on the outside of the subunit, while an extended beta-hairpin is found that lines the wall of the exit tunnel in the center of the 70S ribosome. This Staphylococcus aureus (strain USA300) protein is Large ribosomal subunit protein uL22.